The chain runs to 337 residues: Ketol-acid reductoisomerase (NADP(+)) (337 aa).

One can recognise a KARI N-terminal Rossmann domain in the interval 1-180; that stretch reads MQVYYDKDAD…GGTKGGVIET (180 aa). NADP(+) is bound by residues 24-27, Arg47, and Ser51; that span reads YGSQ. His106 is a catalytic residue. Position 132 (Gly132) interacts with NADP(+). In terms of domain architecture, KARI C-terminal knotted spans 181 to 326; it reads TFREETETDL…AQLRAMMPWI (146 aa). Asp189, Glu193, Glu225, and Glu229 together coordinate Mg(2+). Residue Ser250 participates in substrate binding.

Belongs to the ketol-acid reductoisomerase family. The cofactor is Mg(2+).

The enzyme catalyses (2R)-2,3-dihydroxy-3-methylbutanoate + NADP(+) = (2S)-2-acetolactate + NADPH + H(+). It carries out the reaction (2R,3R)-2,3-dihydroxy-3-methylpentanoate + NADP(+) = (S)-2-ethyl-2-hydroxy-3-oxobutanoate + NADPH + H(+). It participates in amino-acid biosynthesis; L-isoleucine biosynthesis; L-isoleucine from 2-oxobutanoate: step 2/4. It functions in the pathway amino-acid biosynthesis; L-valine biosynthesis; L-valine from pyruvate: step 2/4. Involved in the biosynthesis of branched-chain amino acids (BCAA). Catalyzes an alkyl-migration followed by a ketol-acid reduction of (S)-2-acetolactate (S2AL) to yield (R)-2,3-dihydroxy-isovalerate. In the isomerase reaction, S2AL is rearranged via a Mg-dependent methyl migration to produce 3-hydroxy-3-methyl-2-ketobutyrate (HMKB). In the reductase reaction, this 2-ketoacid undergoes a metal-dependent reduction by NADPH to yield (R)-2,3-dihydroxy-isovalerate. The chain is Ketol-acid reductoisomerase (NADP(+)) from Neisseria meningitidis serogroup A / serotype 4A (strain DSM 15465 / Z2491).